We begin with the raw amino-acid sequence, 749 residues long: Protein lin-54 homolog (749 aa).

Lys139 participates in a covalent cross-link: Glycyl lysine isopeptide (Lys-Gly) (interchain with G-Cter in SUMO2). An N6-acetyllysine mark is found at Lys244 and Lys249. Residues Ser264, Ser282, Ser310, and Ser314 each carry the phosphoserine modification. Lys357 is covalently cross-linked (Glycyl lysine isopeptide (Lys-Gly) (interchain with G-Cter in SUMO2)). Positions 369–388 are disordered; it reads ASSSTQPVSQNPSTNTQPLQ. Positions 521–634 constitute a CRC domain; it reads PRKPCNCTKS…KCIGCKNFEE (114 aa). The interval 523-536 is DNA-binding; the sequence is KPCNCTKSLCLKLY. Cys525, Cys527, Cys532, Cys537, Cys539, Cys546, Cys549, Cys551, and Cys554 together coordinate Zn(2+). Residues 583-596 form a linker region; it reads IGKGKEGESDRRHS. Residues Cys599, Cys601, Cys606, Cys611, Cys613, Cys620, Cys624, Cys626, and Cys629 each contribute to the Zn(2+) site. Residues 599 to 612 form a DNA-binding region; that stretch reads CNCKRSGCLKNYCE. Ser635 bears the Phosphoserine mark. Glycyl lysine isopeptide (Lys-Gly) (interchain with G-Cter in SUMO2) cross-links involve residues Lys639, Lys659, and Lys661.

Belongs to the lin-54 family. As to quaternary structure, component of the DREAM complex (also named LINC complex) at least composed of E2F4, E2F5, LIN9, LIN37, LIN52, LIN54, MYBL1, MYBL2, RBL1, RBL2, RBBP4, TFDP1 and TFDP2. The complex exists in quiescent cells where it represses cell cycle-dependent genes. It dissociates in S phase when LIN9, LIN37, LIN52 and LIN54 form a subcomplex that binds to MYBL2.

The protein localises to the nucleus. In terms of biological role, component of the DREAM complex, a multiprotein complex that can both act as a transcription activator or repressor depending on the context. In G0 phase, the complex binds to more than 800 promoters and is required for repression of E2F target genes. In S phase, the complex selectively binds to the promoters of G2/M genes whose products are required for mitosis and participates in their cell cycle dependent activation. In the complex, acts as a DNA-binding protein that binds the promoter of CDK1 in a sequence-specific manner. Specifically recognizes the consensus motif 5'-TTYRAA-3' in target DNA. The sequence is that of Protein lin-54 homolog (LIN54) from Homo sapiens (Human).